The sequence spans 585 residues: DNA mismatch repair protein MutL (585 aa).

The protein belongs to the DNA mismatch repair MutL/HexB family.

This protein is involved in the repair of mismatches in DNA. It is required for dam-dependent methyl-directed DNA mismatch repair. May act as a 'molecular matchmaker', a protein that promotes the formation of a stable complex between two or more DNA-binding proteins in an ATP-dependent manner without itself being part of a final effector complex. The chain is DNA mismatch repair protein MutL from Methanoculleus marisnigri (strain ATCC 35101 / DSM 1498 / JR1).